The primary structure comprises 283 residues: Acetylglutamate kinase (283 aa).

Substrate-binding positions include 64–65 (GG), Arg-86, and Asn-181.

The protein belongs to the acetylglutamate kinase family. ArgB subfamily.

It localises to the cytoplasm. It carries out the reaction N-acetyl-L-glutamate + ATP = N-acetyl-L-glutamyl 5-phosphate + ADP. Its pathway is amino-acid biosynthesis; L-arginine biosynthesis; N(2)-acetyl-L-ornithine from L-glutamate: step 2/4. Functionally, catalyzes the ATP-dependent phosphorylation of N-acetyl-L-glutamate. This Sulfurovum sp. (strain NBC37-1) protein is Acetylglutamate kinase.